The primary structure comprises 611 residues: Dehydrogenase pkfF (611 aa).

An N-terminal signal peptide occupies residues methionine 1–alanine 19. N-linked (GlcNAc...) asparagine glycans are attached at residues asparagine 28 and asparagine 38. Residues threonine 50–serine 51, glutamate 71–alanine 72, and histidine 137–valine 140 each bind FAD. N-linked (GlcNAc...) asparagine glycans are attached at residues asparagine 180, asparagine 187, asparagine 240, asparagine 272, asparagine 409, and asparagine 471. Histidine 547 (proton acceptor) is an active-site residue. Residues alanine 581 and proline 592 to glutamine 593 contribute to the FAD site.

Belongs to the GMC oxidoreductase family. FAD serves as cofactor.

It functions in the pathway secondary metabolite biosynthesis. Its function is as follows. Dehydrogenase; part of the gene cluster that mediates the biosynthesis of aspernidine A, a prenylated isoindolinone. The starting point of the biosynthesis of aspernidin A is the production of orsellinaldehyde by the non-reducing polyketide synthase pkfA. Hydroxylation, methylation of one of the phenol groups, and prenylation, presumably catalyzed by the prenyltransferase pkfE, would be needed to yield aspernidine D. Subsequently, the cytochrome P450 monooxygenase pkfB is responsible for hydroxylation of aspernidine D to yield aspernidine E. The dehydrogenase pkfF may be responsible for further oxidation of aspernidine E to form a dialdehyde intermediate which is further transformed in a series of steps, some of which are enzyme-mediated, to generate aspernidine A. The possibility that additional enzymes outside of the cluster are involved in aspernidine A biosynthesis cannot be excluded. In Emericella nidulans (strain FGSC A4 / ATCC 38163 / CBS 112.46 / NRRL 194 / M139) (Aspergillus nidulans), this protein is Dehydrogenase pkfF.